Reading from the N-terminus, the 368-residue chain is Left-right determination factor 1 (368 aa).

The N-terminal stretch at 1–21 (MPFLWLCWALWALSLVSLREA) is a signal peptide. A propeptide spans 22 to 76 (LTGEQILGSLLQQLQLDQPPVLDKADVEGMVIPSHVRTQYVALLQHSHASRSRGK) (or 135). An N-linked (GlcNAc...) asparagine glycan is attached at asparagine 158. 4 disulfides stabilise this stretch: cysteine 253–cysteine 266, cysteine 265–cysteine 318, cysteine 295–cysteine 353, and cysteine 299–cysteine 355.

The protein belongs to the TGF-beta family. The processing of the protein may also occur at the second R-X-X-R site located at AA 132-135. Processing appears to be regulated in a cell-type specific manner.

It is found in the secreted. Its function is as follows. Required for left-right axis determination as a regulator of LEFTY2 and NODAL. The protein is Left-right determination factor 1 (Lefty1) of Mus musculus (Mouse).